A 261-amino-acid polypeptide reads, in one-letter code: Aminoglycoside N(3)-acetyltransferase IV (261 aa).

This sequence belongs to the antibiotic N-acetyltransferase family.

It carries out the reaction a 2-deoxystreptamine antibiotic + acetyl-CoA = an N(3)-acetyl-2-deoxystreptamine antibiotic + CoA + H(+). In terms of biological role, resistance to antibiotics containing the 2-deoxy-streptamine ring including gentamicin, kanamycin, tobramycin, neomycin and apramycin. This Salmonella sp protein is Aminoglycoside N(3)-acetyltransferase IV (aacC4).